The chain runs to 219 residues: Lipid transferase CIDEA (219 aa).

In terms of domain architecture, CIDE-N spans P33–P110. Residues C163 to S180 form an amphipathic helix region.

The protein belongs to the CIDE family. Homodimer. Interacts with CIDEC. Directly interacts with CEBPB. Interacts with isoform CLSTN3beta of CLSTN3; inhibiting the lipid transferase activity of CIDEA. As to expression, expressed in omental and subcutaneous adipose tissue (at protein level).

Its subcellular location is the lipid droplet. The protein localises to the nucleus. It carries out the reaction a triacyl-sn-glycerol(in) = a triacyl-sn-glycerol(out). Functionally, lipid transferase that promotes unilocular lipid droplet formation by mediating lipid droplet fusion. Lipid droplet fusion promotes their enlargement, restricting lipolysis and favoring lipid storage. Localizes on the lipid droplet surface, at focal contact sites between lipid droplets, and mediates atypical lipid droplet fusion by promoting directional net neutral lipid transfer from the smaller to larger lipid droplets. The transfer direction may be driven by the internal pressure difference between the contacting lipid droplet pair and occurs at a lower rate than that promoted by CIDEC. May also act as a CEBPB coactivator in epithelial cells to control the expression of a subset of CEBPB downstream target genes, including ID2, IGF1, PRLR, SOCS1, SOCS3, XDH, but not casein. By interacting with CEBPB, strengthens the association of CEBPB with the XDH promoter, increases histone acetylation and dissociates HDAC1 from the promoter. When overexpressed, induces apoptosis; the physiological significance of its role in apoptosis is unclear. The chain is Lipid transferase CIDEA from Homo sapiens (Human).